A 172-amino-acid chain; its full sequence is 3-phenylpropionate/cinnamic acid dioxygenase subunit beta (172 aa).

This sequence belongs to the bacterial ring-hydroxylating dioxygenase beta subunit family. This dioxygenase system consists of four proteins: the two subunits of the hydroxylase component (HcaE and HcaF), a ferredoxin (HcaC) and a ferredoxin reductase (HcaD).

It catalyses the reaction 3-phenylpropanoate + NADH + O2 + H(+) = 3-(cis-5,6-dihydroxycyclohexa-1,3-dien-1-yl)propanoate + NAD(+). The catalysed reaction is (E)-cinnamate + NADH + O2 + H(+) = (2E)-3-(cis-5,6-dihydroxycyclohexa-1,3-dien-1-yl)prop-2-enoate + NAD(+). It functions in the pathway aromatic compound metabolism; 3-phenylpropanoate degradation. Functionally, part of the multicomponent 3-phenylpropionate dioxygenase. Converts 3-phenylpropionic acid (PP) and cinnamic acid (CI) into 3-phenylpropionate-dihydrodiol (PP-dihydrodiol) and cinnamic acid-dihydrodiol (CI-dihydrodiol), respectively. This chain is 3-phenylpropionate/cinnamic acid dioxygenase subunit beta, found in Escherichia coli O17:K52:H18 (strain UMN026 / ExPEC).